The sequence spans 521 residues: Bifunctional purine biosynthesis protein PurH (521 aa).

Residues 1–147 (MAKITRALIS…KNNADVTVVV (147 aa)) form the MGS-like domain.

This sequence belongs to the PurH family.

It catalyses the reaction (6R)-10-formyltetrahydrofolate + 5-amino-1-(5-phospho-beta-D-ribosyl)imidazole-4-carboxamide = 5-formamido-1-(5-phospho-D-ribosyl)imidazole-4-carboxamide + (6S)-5,6,7,8-tetrahydrofolate. The catalysed reaction is IMP + H2O = 5-formamido-1-(5-phospho-D-ribosyl)imidazole-4-carboxamide. It functions in the pathway purine metabolism; IMP biosynthesis via de novo pathway; 5-formamido-1-(5-phospho-D-ribosyl)imidazole-4-carboxamide from 5-amino-1-(5-phospho-D-ribosyl)imidazole-4-carboxamide (10-formyl THF route): step 1/1. Its pathway is purine metabolism; IMP biosynthesis via de novo pathway; IMP from 5-formamido-1-(5-phospho-D-ribosyl)imidazole-4-carboxamide: step 1/1. In Geobacter metallireducens (strain ATCC 53774 / DSM 7210 / GS-15), this protein is Bifunctional purine biosynthesis protein PurH.